We begin with the raw amino-acid sequence, 238 residues long: Uridylate kinase (238 aa).

12–15 contributes to the ATP binding site; the sequence is KLSG. Glycine 54 contributes to the UMP binding site. Glycine 55 and arginine 59 together coordinate ATP. Residues aspartate 74 and 135-142 each bind UMP; that span reads TGNPYFST. 2 residues coordinate ATP: tyrosine 168 and aspartate 171.

It belongs to the UMP kinase family. In terms of assembly, homohexamer.

It localises to the cytoplasm. It carries out the reaction UMP + ATP = UDP + ADP. Its pathway is pyrimidine metabolism; CTP biosynthesis via de novo pathway; UDP from UMP (UMPK route): step 1/1. Inhibited by UTP. Functionally, catalyzes the reversible phosphorylation of UMP to UDP. This chain is Uridylate kinase, found in Syntrophomonas wolfei subsp. wolfei (strain DSM 2245B / Goettingen).